The primary structure comprises 132 residues: uncharacterized protein (132 aa).

The disordered stretch occupies residues 17–75; that stretch reads RSAVPRWPHLSSQSGVEPPDRWTGTPGWPSRDQEAPGSMMPPAAAQPSAHGALVPPATA. The span at 51-65 shows a compositional bias: low complexity; sequence APGSMMPPAAAQPSA.

In terms of tissue distribution, expressed exclusively in heart.

Its subcellular location is the cytoplasm. This is an uncharacterized protein from Homo sapiens (Human).